Reading from the N-terminus, the 352-residue chain is 3-isopropylmalate dehydrogenase (352 aa).

Substrate is bound by residues Arg-96, Arg-106, Arg-134, and Asp-220. Mg(2+) contacts are provided by Asp-220, Asp-244, and Asp-248. Residue 277–289 (GSAPDIAGKNLAN) coordinates NAD(+).

It belongs to the isocitrate and isopropylmalate dehydrogenases family. LeuB type 1 subfamily. In terms of assembly, homodimer. Mg(2+) is required as a cofactor. It depends on Mn(2+) as a cofactor.

The protein localises to the cytoplasm. It carries out the reaction (2R,3S)-3-isopropylmalate + NAD(+) = 4-methyl-2-oxopentanoate + CO2 + NADH. Its pathway is amino-acid biosynthesis; L-leucine biosynthesis; L-leucine from 3-methyl-2-oxobutanoate: step 3/4. Catalyzes the oxidation of 3-carboxy-2-hydroxy-4-methylpentanoate (3-isopropylmalate) to 3-carboxy-4-methyl-2-oxopentanoate. The product decarboxylates to 4-methyl-2 oxopentanoate. In Desulfitobacterium hafniense (strain Y51), this protein is 3-isopropylmalate dehydrogenase.